Reading from the N-terminus, the 228-residue chain is MGQKVHPTGIRLGIVKEHTSVWYADGRTYADYLLADLNVREYLQDKLKSASVSRIDIHRPAQTARITIHTARPGIVIGKKGEDVEKLRQDLTKQMGVPVHINIEEIRKPELDAMLVAQSVAQQLERRVMFRRAMKRAVQNAMRIGAKGIKIQVSGRLGGAEIARTEWYREGRVPLHTLRADIDYNTYEAHTTYGVIGVKVWIFKGEVIGGRHEELKPQAPAPRKKAAK.

Positions 39 to 107 constitute a KH type-2 domain; the sequence is VREYLQDKLK…PVHINIEEIR (69 aa).

Belongs to the universal ribosomal protein uS3 family. In terms of assembly, part of the 30S ribosomal subunit. Forms a tight complex with proteins S10 and S14.

Binds the lower part of the 30S subunit head. Binds mRNA in the 70S ribosome, positioning it for translation. The polypeptide is Small ribosomal subunit protein uS3 (Stutzerimonas stutzeri (strain A1501) (Pseudomonas stutzeri)).